The sequence spans 449 residues: Putative BTB/POZ domain-containing protein L742 (449 aa).

Residues 79–148 (EDGYVYINIG…LTMSNQELSG (70 aa)) form the BTB domain.

Belongs to the mimivirus BTB/WD family.

This chain is Putative BTB/POZ domain-containing protein L742, found in Acanthamoeba polyphaga mimivirus (APMV).